The sequence spans 172 residues: MDGYHLPRAQLAAMPDPATAIYRRGAEFTFDGEGFYRLVQRLRERLTAASPTVFAPSFDHAIKDPVPDDVAISPGSRVIILEGLYLSLNREPWSSAAALMDESWFVGVDREIARARLVKRHVTSGIVPDTAAAEHRILSTDFLNADDIVKNRLPVQEMVPGNWRELSQDRLD.

This sequence belongs to the YFH7 family.

Its function is as follows. ATP-dependent kinase-like protein; part of the gene cluster that mediates the biosynthesis of notoamide, a fungal indole alkaloid that belongs to a family of natural products containing a characteristic bicyclo[2.2.2]diazaoctane core. The first step of notoamide biosynthesis involves coupling of L-proline and L-tryptophan by the bimodular NRPS notE', to produce cyclo-L-tryptophan-L-proline called brevianamide F. The reverse prenyltransferase notF' then acts as a deoxybrevianamide E synthase and converts brevianamide F to deoxybrevianamide E via reverse prenylation at C-2 of the indole ring leading to the bicyclo[2.2.2]diazaoctane core. Deoxybrevianamide E is further hydroxylated at C-6 of the indole ring, likely catalyzed by the cytochrome P450 monooxygenase notG', to yield 6-hydroxy-deoxybrevianamide E. 6-hydroxy-deoxybrevianamide E is a specific substrate of the prenyltransferase notC' for normal prenylation at C-7 to produce 6-hydroxy-7-prenyl-deoxybrevianamide, also called notoamide S. As the proposed pivotal branching point in notoamide biosynthesis, notoamide S can be diverted to notoamide E through an oxidative pyran ring closure putatively catalyzed by either notH' cytochrome P450 monooxygenase or the notD' FAD-linked oxidoreductase. This step would be followed by an indole 2,3-epoxidation-initiated pinacol-like rearrangement catalyzed by the notB' FAD-dependent monooxygenase leading to the formation of notoamide C and notoamide D. On the other hand notoamide S is converted to notoamide T by notH' (or notD'), a bifunctional oxidase that also functions as the intramolecular Diels-Alderase responsible for generation of (-)-notoamide T. To generate antipodal (+)-notoaminide T, notH (or notD) in Aspergillus strain MF297-2 is expected to catalyze a Diels-Alder reaction leading to the opposite stereochemistry. The remaining oxidoreductase notD' (or notH') likely catalyzes the oxidative pyran ring formation to yield (-)-stephacidin A. The FAD-dependent monooxygenase notI' is highly similar to notB' and is predicted to catalyze a similar conversion from (-)-stephacidin A to (+)-notoamide B via the 2,3-epoxidation of (-)-stephacidin A followed by a pinacol-type rearrangement. Finally, it remains unclear which enzyme could be responsible for the final hydroxylation steps leading to notoamide A and sclerotiamide. The function of notQ' in the notoamide biosynthesis has not been determined yet. In Aspergillus versicolor, this protein is ATP-dependent kinase-like protein notR'.